Consider the following 362-residue polypeptide: NAD(P)H-quinone oxidoreductase subunit 1, chloroplastic (362 aa).

8 helical membrane-spanning segments follow: residues 31-51 (WVPL…LVIV), 99-119 (WLFT…YLVV), 132-152 (IGIF…LMSG), 178-198 (LAIC…VDIV), 206-226 (ILTW…IAAL), 268-288 (LVSG…PFAI), 303-323 (AFLG…AAIL), and 336-356 (LLDL…LLTA).

It belongs to the complex I subunit 1 family. As to quaternary structure, NDH is composed of at least 16 different subunits, 5 of which are encoded in the nucleus.

The protein resides in the plastid. It localises to the chloroplast thylakoid membrane. It catalyses the reaction a plastoquinone + NADH + (n+1) H(+)(in) = a plastoquinol + NAD(+) + n H(+)(out). The catalysed reaction is a plastoquinone + NADPH + (n+1) H(+)(in) = a plastoquinol + NADP(+) + n H(+)(out). NDH shuttles electrons from NAD(P)H:plastoquinone, via FMN and iron-sulfur (Fe-S) centers, to quinones in the photosynthetic chain and possibly in a chloroplast respiratory chain. The immediate electron acceptor for the enzyme in this species is believed to be plastoquinone. Couples the redox reaction to proton translocation, and thus conserves the redox energy in a proton gradient. The chain is NAD(P)H-quinone oxidoreductase subunit 1, chloroplastic from Nephroselmis olivacea (Green alga).